The chain runs to 335 residues: Fructose-1,6-bisphosphatase class 1 (335 aa).

Mg(2+) contacts are provided by Glu-91, Asp-113, Leu-115, and Asp-116. Substrate is bound by residues 116–119 (DGSS), Asn-208, and Lys-274. Glu-280 is a Mg(2+) binding site.

It belongs to the FBPase class 1 family. As to quaternary structure, homotetramer. It depends on Mg(2+) as a cofactor.

It is found in the cytoplasm. The enzyme catalyses beta-D-fructose 1,6-bisphosphate + H2O = beta-D-fructose 6-phosphate + phosphate. Its pathway is carbohydrate biosynthesis; gluconeogenesis. The polypeptide is Fructose-1,6-bisphosphatase class 1 (Chromobacterium violaceum (strain ATCC 12472 / DSM 30191 / JCM 1249 / CCUG 213 / NBRC 12614 / NCIMB 9131 / NCTC 9757 / MK)).